The following is a 412-amino-acid chain: uncharacterized protein (412 aa).

Zn(2+) is bound at residue His49. Glu52 acts as the Proton acceptor in catalysis. The Zn(2+) site is built by His53 and Glu129.

The protein belongs to the peptidase M16 family. The cofactor is Zn(2+).

This is an uncharacterized protein from Rickettsia typhi (strain ATCC VR-144 / Wilmington).